Reading from the N-terminus, the 260-residue chain is Triosephosphate isomerase (260 aa).

Position 11–13 (Asn-11–Lys-13) interacts with substrate. His-103 acts as the Electrophile in catalysis. Glu-175 acts as the Proton acceptor in catalysis. Substrate is bound by residues Gly-181, Ser-220, and Gly-241–Gly-242.

The protein belongs to the triosephosphate isomerase family. Homodimer.

It localises to the cytoplasm. It carries out the reaction D-glyceraldehyde 3-phosphate = dihydroxyacetone phosphate. Its pathway is carbohydrate biosynthesis; gluconeogenesis. The protein operates within carbohydrate degradation; glycolysis; D-glyceraldehyde 3-phosphate from glycerone phosphate: step 1/1. Functionally, involved in the gluconeogenesis. Catalyzes stereospecifically the conversion of dihydroxyacetone phosphate (DHAP) to D-glyceraldehyde-3-phosphate (G3P). The sequence is that of Triosephosphate isomerase from Shewanella sp. (strain MR-7).